The primary structure comprises 609 residues: Hemagglutinin/proteinase (609 aa).

Residues Met-1 to Ala-24 form the signal peptide. The propeptide occupies Ala-25 to Ala-196. His-343 contacts Zn(2+). Glu-344 is an active-site residue. Zn(2+)-binding residues include His-347 and Glu-367. The active-site Proton donor is the His-426.

The protein belongs to the peptidase M4 family. Requires Zn(2+) as cofactor.

The protein localises to the secreted. In terms of biological role, may play a role in the pathogenesis of cholera. Hap nicks and activates the A subunit of cholera enterotoxin and related enterotoxins. This Vibrio cholerae serotype O1 (strain ATCC 39315 / El Tor Inaba N16961) protein is Hemagglutinin/proteinase (hap).